Reading from the N-terminus, the 285-residue chain is Protein HtrL (285 aa).

The chain is Protein HtrL from Escherichia coli (strain K12).